The chain runs to 151 residues: Small ribosomal subunit protein uS15 (151 aa).

The protein belongs to the universal ribosomal protein uS15 family. In terms of assembly, component of the small ribosomal subunit.

It is found in the cytoplasm. Component of the small ribosomal subunit. The ribosome is a large ribonucleoprotein complex responsible for the synthesis of proteins in the cell. The sequence is that of Small ribosomal subunit protein uS15 (rps13) from Gillichthys mirabilis (Long-jawed mudsucker).